The chain runs to 298 residues: GTPase Era (298 aa).

The region spanning Lys3 to Glu170 is the Era-type G domain. Positions Gly11–Ser18 are G1. Residue Gly11 to Ser18 participates in GTP binding. Residues Gln37 to Asn41 form a G2 region. Residues Asp58–Gly61 are G3. GTP is bound by residues Asp58–Ile62 and Asn120–Asp123. Residues Asn120–Asp123 are G4. Positions Ile149 to Ala151 are G5. The KH type-2 domain occupies Thr201–Lys279.

Belongs to the TRAFAC class TrmE-Era-EngA-EngB-Septin-like GTPase superfamily. Era GTPase family. In terms of assembly, monomer.

It localises to the cytoplasm. It is found in the cell membrane. Its function is as follows. An essential GTPase that binds both GDP and GTP, with rapid nucleotide exchange. Plays a role in 16S rRNA processing and 30S ribosomal subunit biogenesis and possibly also in cell cycle regulation and energy metabolism. This chain is GTPase Era, found in Streptococcus equi subsp. zooepidemicus (strain H70).